We begin with the raw amino-acid sequence, 162 residues long: Probable chemoreceptor glutamine deamidase CheD (162 aa).

It belongs to the CheD family.

The enzyme catalyses L-glutaminyl-[protein] + H2O = L-glutamyl-[protein] + NH4(+). Its function is as follows. Probably deamidates glutamine residues to glutamate on methyl-accepting chemotaxis receptors (MCPs), playing an important role in chemotaxis. This is Probable chemoreceptor glutamine deamidase CheD from Clostridium botulinum (strain ATCC 19397 / Type A).